A 288-amino-acid chain; its full sequence is Nucleotide-binding protein NE1849 (288 aa).

ATP is bound at residue 8 to 15; sequence GLSGSGKS. 57-60 serves as a coordination point for GTP; the sequence is DMRS.

It belongs to the RapZ-like family.

In terms of biological role, displays ATPase and GTPase activities. This chain is Nucleotide-binding protein NE1849, found in Nitrosomonas europaea (strain ATCC 19718 / CIP 103999 / KCTC 2705 / NBRC 14298).